The primary structure comprises 143 residues: 6,7-dimethyl-8-ribityllumazine synthase (143 aa).

5-amino-6-(D-ribitylamino)uracil is bound by residues Trp-10, Ser-44–Glu-46, and Cys-68–Ile-70. Asp-73–Thr-74 contributes to the (2S)-2-hydroxy-3-oxobutyl phosphate binding site. The active-site Proton donor is His-76. Position 101 (Tyr-101) interacts with 5-amino-6-(D-ribitylamino)uracil. Position 115 (Arg-115) interacts with (2S)-2-hydroxy-3-oxobutyl phosphate.

This sequence belongs to the DMRL synthase family.

The enzyme catalyses (2S)-2-hydroxy-3-oxobutyl phosphate + 5-amino-6-(D-ribitylamino)uracil = 6,7-dimethyl-8-(1-D-ribityl)lumazine + phosphate + 2 H2O + H(+). It functions in the pathway cofactor biosynthesis; riboflavin biosynthesis; riboflavin from 2-hydroxy-3-oxobutyl phosphate and 5-amino-6-(D-ribitylamino)uracil: step 1/2. Functionally, catalyzes the formation of 6,7-dimethyl-8-ribityllumazine by condensation of 5-amino-6-(D-ribitylamino)uracil with 3,4-dihydroxy-2-butanone 4-phosphate. This is the penultimate step in the biosynthesis of riboflavin. This chain is 6,7-dimethyl-8-ribityllumazine synthase, found in Bacteroides fragilis (strain YCH46).